Reading from the N-terminus, the 331-residue chain is Cilia- and flagella-associated protein 119 (331 aa).

Phosphoserine is present on Ser-34. Disordered stretches follow at residues 236-271 (LWPESETEKEESKEMEEQAVTPQKEELETVAPPEPE) and 309-331 (SSKLTALERPFQLPPGKGKSKTK). A coiled-coil region spans residues 286–317 (VNKELEQLQGLVEERLKASEERLSSKLTALER).

Its subcellular location is the cell projection. The protein localises to the cilium. It is found in the flagellum. It localises to the cytoplasmic vesicle. The protein resides in the secretory vesicle. Its subcellular location is the acrosome. The protein localises to the cytoplasm. The sequence is that of Cilia- and flagella-associated protein 119 from Homo sapiens (Human).